The following is a 109-amino-acid chain: Movement protein TGB2 (109 aa).

The Cytoplasmic segment spans residues 1-9 (MPLQPPPDH). A helical transmembrane segment spans residues 10 to 30 (TWAVRIIALGLAVTALIFTST). Residues 31 to 71 (RDTSRHVGDPSHSLPFGGHYRDGSKVIHYNSPRSSKPSNHT) are Lumenal-facing. Residues 72 to 92 (PYLLFAPIGIILLIHALHRLG) form a helical membrane-spanning segment. Residues 93 to 109 (NSAHICRCTHCMPHSQT) are Cytoplasmic-facing.

Belongs to the Tymovirales TGBp2 protein family.

Its subcellular location is the host endoplasmic reticulum membrane. In terms of biological role, plays a role in viral cell-to-cell propagation, by facilitating genome transport to neighboring plant cells through plasmosdesmata,. In Citrus (ICRSV), this protein is Movement protein TGB2.